Reading from the N-terminus, the 767-residue chain is RNA cytosine C(5)-methyltransferase NSUN2 (767 aa).

Residues 1–36 (MGRRSRGRRLQQQQRPEDAEDGAEGGGKRGEAGWEG) are disordered. Residue lysine 46 forms a Glycyl lysine isopeptide (Lys-Gly) (interchain with G-Cter in SUMO2) linkage. Serine 139 bears the Phosphoserine; by AURKB mark. S-adenosyl-L-methionine is bound by residues 184 to 190 (CAAPGSK), aspartate 215, aspartate 242, and aspartate 268. Cysteine 321 acts as the Nucleophile in catalysis. A disordered region spans residues 436-481 (NKRQPKLQGKSAETRESTQLSPADLTEGKPTDPSKLESPSFTGTGD). Position 456 is a phosphoserine (serine 456). Basic and acidic residues predominate over residues 461–470 (TEGKPTDPSK). Glycyl lysine isopeptide (Lys-Gly) (interchain with G-Cter in SUMO2) cross-links involve residues lysine 464 and lysine 470. Serine 473 carries the phosphoserine modification. Glycyl lysine isopeptide (Lys-Gly) (interchain with G-Cter in SUMO2) cross-links involve residues lysine 511 and lysine 516. N6-acetyllysine; alternate is present on lysine 586. Residue lysine 586 is modified to N6-malonyllysine; alternate. Lysine 586 is covalently cross-linked (Glycyl lysine isopeptide (Lys-Gly) (interchain with G-Cter in SUMO2); alternate). Serine 593 is subject to Phosphoserine. Glycyl lysine isopeptide (Lys-Gly) (interchain with G-Cter in SUMO2) cross-links involve residues lysine 640, lysine 654, and lysine 660. Threonine 718 carries the post-translational modification Phosphothreonine. Residues 719 to 730 (NESAASTGQPDN) are compositionally biased toward polar residues. Residues 719–767 (NESAASTGQPDNDVTEGQRAGEPNSPDAEEANSPDVTAGCDPAGVHPPR) are disordered. A phosphoserine mark is found at serine 724, serine 743, and serine 751.

This sequence belongs to the class I-like SAM-binding methyltransferase superfamily. RsmB/NOP family. TRM4 subfamily. Interacts with NPM1 and NCL during interphase; interaction is disrupted following phosphorylation at Ser-139. In terms of processing, phosphorylated at Ser-139 by AURKB during mitosis, leading to abolish methyltransferase activity and the interaction with NPM1. In terms of tissue distribution, expressed in adult and fetal brain and in lymphoblastoid cells.

Its subcellular location is the nucleus. It is found in the nucleolus. It localises to the cytoplasm. The protein resides in the mitochondrion. The protein localises to the cytoskeleton. Its subcellular location is the spindle. It is found in the secreted. It localises to the extracellular exosome. The enzyme catalyses cytidine(48) in tRNA + S-adenosyl-L-methionine = 5-methylcytidine(48) in tRNA + S-adenosyl-L-homocysteine + H(+). It carries out the reaction cytidine(49) in tRNA + S-adenosyl-L-methionine = 5-methylcytidine(49) in tRNA + S-adenosyl-L-homocysteine + H(+). The catalysed reaction is cytidine(50) in tRNA + S-adenosyl-L-methionine = 5-methylcytidine(50) in tRNA + S-adenosyl-L-homocysteine + H(+). It catalyses the reaction cytidine(34) in tRNA precursor + S-adenosyl-L-methionine = 5-methylcytidine(34) in tRNA precursor + S-adenosyl-L-homocysteine + H(+). The enzyme catalyses a cytidine in mRNA + S-adenosyl-L-methionine = a 5-methylcytidine in mRNA + S-adenosyl-L-homocysteine + H(+). Its activity is regulated as follows. Inhibited by magnesium ions. Functionally, RNA cytosine C(5)-methyltransferase that methylates cytosine to 5-methylcytosine (m5C) in various RNAs, such as tRNAs, mRNAs and some long non-coding RNAs (lncRNAs). Involved in various processes, such as epidermal stem cell differentiation, testis differentiation and maternal to zygotic transition during early development: acts by increasing protein synthesis; cytosine C(5)-methylation promoting tRNA stability and preventing mRNA decay. Methylates cytosine to 5-methylcytosine (m5C) at positions 34 and 48 of intron-containing tRNA(Leu)(CAA) precursors, and at positions 48, 49 and 50 of tRNA(Gly)(GCC) precursors. tRNA methylation is required generation of RNA fragments derived from tRNAs (tRFs). Also mediates C(5)-methylation of mitochondrial tRNAs. Catalyzes cytosine C(5)-methylation of mRNAs, leading to stabilize them and prevent mRNA decay: mRNA stabilization involves YBX1 that specifically recognizes and binds m5C-modified transcripts. Cytosine C(5)-methylation of mRNAs also regulates mRNA export: methylated transcripts are specifically recognized by THOC4/ALYREF, which mediates mRNA nucleo-cytoplasmic shuttling. Also mediates cytosine C(5)-methylation of non-coding RNAs, such as vault RNAs (vtRNAs), promoting their processing into regulatory small RNAs. Cytosine C(5)-methylation of vtRNA VTRNA1.1 promotes its processing into small-vault RNA4 (svRNA4) and regulates epidermal differentiation. May act downstream of Myc to regulate epidermal cell growth and proliferation. Required for proper spindle assembly and chromosome segregation, independently of its methyltransferase activity. The polypeptide is RNA cytosine C(5)-methyltransferase NSUN2 (Homo sapiens (Human)).